Consider the following 434-residue polypeptide: [Pyruvate dehydrogenase (acetyl-transferring)] kinase isozyme 1, mitochondrial (434 aa).

A mitochondrion-targeting transit peptide spans 1 to 26; sequence MRLARLLRGGTSVRPLCAVPCASRSL. The residue at position 136 (Tyr-136) is a Phosphotyrosine; by FGFR1. A Histidine kinase domain is found at 161-391; that stretch reads TEYKESFGVD…DAVIYIKALS (231 aa). Tyr-241 carries the post-translational modification Phosphotyrosine; by FGFR1, ABL1, FLT3 and JAK2. Tyr-242 carries the phosphotyrosine; by FGFR1 modification. Residues 277-284, Asp-316, 335-336, and 352-357 contribute to the ATP site; these read ELFKNAMR, ST, and GFGYGL. The residue at position 336 (Thr-336) is a Phosphothreonine. Lys-403 carries the N6-succinyllysine modification.

The protein belongs to the PDK/BCKDK protein kinase family. As to quaternary structure, homodimer, and heterodimer with PDK2. Interacts with the pyruvate dehydrogenase complex subunit DLAT, and is part of the multimeric pyruvate dehydrogenase complex that contains multiple copies of pyruvate dehydrogenase (E1), dihydrolipoamide acetyltransferase (DLAT, E2) and lipoamide dehydrogenase (DLD, E3). Interacts with phosphoglycerate kinase PGK1; the interaction is direct, occurs under hypoxic conditions and leads to PDK1-mediated inhibition of pyruvate dehydrogenase complex activity. Phosphorylated by constitutively activated ABL1, FGFR1, FLT3 and JAK2 (in vitro), and this may also occur in cancer cells that express constitutively activated ABL1, FGFR1, FLT3 and JAK2. Phosphorylation at Tyr-241 and Tyr-242 strongly increases kinase activity, while phosphorylation at Tyr-136 has a lesser effect. Phosphorylated under hypoxic conditions at Thr-336 by phosphoglycerate kinase PGK1 which has an activating effect.

It is found in the mitochondrion matrix. It carries out the reaction L-seryl-[pyruvate dehydrogenase E1 alpha subunit] + ATP = O-phospho-L-seryl-[pyruvate dehydrogenase E1 alpha subunit] + ADP + H(+). Functionally, kinase that plays a key role in regulation of glucose and fatty acid metabolism and homeostasis via phosphorylation of the pyruvate dehydrogenase subunits PDHA1 and PDHA2. This inhibits pyruvate dehydrogenase activity, and thereby regulates metabolite flux through the tricarboxylic acid cycle, down-regulates aerobic respiration and inhibits the formation of acetyl-coenzyme A from pyruvate. Plays an important role in cellular responses to hypoxia and is important for cell proliferation under hypoxia. The sequence is that of [Pyruvate dehydrogenase (acetyl-transferring)] kinase isozyme 1, mitochondrial (Pdk1) from Mus musculus (Mouse).